We begin with the raw amino-acid sequence, 411 residues long: Methylthioribose-1-phosphate isomerase (411 aa).

Position 2 is an N-acetylserine (Ser-2). Asp-280 functions as the Proton donor in the catalytic mechanism. Position 351 is a phosphoserine (Ser-351).

It belongs to the eIF-2B alpha/beta/delta subunits family. MtnA subfamily. Homodimer.

It localises to the cytoplasm. The protein resides in the nucleus. It carries out the reaction 5-(methylsulfanyl)-alpha-D-ribose 1-phosphate = 5-(methylsulfanyl)-D-ribulose 1-phosphate. It functions in the pathway amino-acid biosynthesis; L-methionine biosynthesis via salvage pathway; L-methionine from S-methyl-5-thio-alpha-D-ribose 1-phosphate: step 1/6. Catalyzes the interconversion of methylthioribose-1-phosphate (MTR-1-P) into methylthioribulose-1-phosphate (MTRu-1-P). In Saccharomyces cerevisiae (strain RM11-1a) (Baker's yeast), this protein is Methylthioribose-1-phosphate isomerase.